Reading from the N-terminus, the 291-residue chain is uncharacterized protein (291 aa).

10 helical membrane passes run 1–21 (MHNL…LKIA), 26–46 (IIIE…SYFL), 67–87 (PIFL…SKAV), 95–115 (SDAA…LIFH), 117–137 (TLSQ…FCLL), 149–169 (FKGV…DILF), 179–199 (FPAT…IYLF), 208–228 (SSVI…LFYI), 241–261 (VFAG…ALVF), and 270–290 (WLGI…DKII). Residues 107 to 138 (ILAAFLIFHETLSQSKIIGVVLAFIGLFCLLT) enclose the EamA domain.

It localises to the cell membrane. This is an uncharacterized protein from Haemophilus influenzae (strain ATCC 51907 / DSM 11121 / KW20 / Rd).